An 86-amino-acid polypeptide reads, in one-letter code: Large ribosomal subunit protein uL23 (86 aa).

The protein belongs to the universal ribosomal protein uL23 family. As to quaternary structure, part of the 50S ribosomal subunit. Contacts protein L29.

Functionally, binds to 23S rRNA. One of the proteins that surrounds the polypeptide exit tunnel on the outside of the ribosome. The sequence is that of Large ribosomal subunit protein uL23 from Pyrococcus horikoshii (strain ATCC 700860 / DSM 12428 / JCM 9974 / NBRC 100139 / OT-3).